Reading from the N-terminus, the 323-residue chain is Serine/threonine-protein kinase-transforming protein raf (323 aa).

The 261-residue stretch at 24-284 (VMLSTRIGSG…PQILSSIELL (261 aa)) folds into the Protein kinase domain. ATP-binding positions include 30–38 (IGSGSFGTV) and Lys50. Residue Asp143 is the Proton acceptor of the active site.

The protein belongs to the protein kinase superfamily. TKL Ser/Thr protein kinase family. RAF subfamily.

The catalysed reaction is L-seryl-[protein] + ATP = O-phospho-L-seryl-[protein] + ADP + H(+). It catalyses the reaction L-threonyl-[protein] + ATP = O-phospho-L-threonyl-[protein] + ADP + H(+). The polypeptide is Serine/threonine-protein kinase-transforming protein raf (V-RAF) (Murine sarcoma virus 3611).